The sequence spans 121 residues: Small ribosomal subunit protein uS13 (121 aa).

The interval 94–121 (GLPMRGQRTRTNARTRKGPRKAAAALKK) is disordered.

It belongs to the universal ribosomal protein uS13 family. As to quaternary structure, part of the 30S ribosomal subunit. Forms a loose heterodimer with protein S19. Forms two bridges to the 50S subunit in the 70S ribosome.

Functionally, located at the top of the head of the 30S subunit, it contacts several helices of the 16S rRNA. In the 70S ribosome it contacts the 23S rRNA (bridge B1a) and protein L5 of the 50S subunit (bridge B1b), connecting the 2 subunits; these bridges are implicated in subunit movement. Contacts the tRNAs in the A and P-sites. This chain is Small ribosomal subunit protein uS13, found in Polaromonas sp. (strain JS666 / ATCC BAA-500).